The sequence spans 117 residues: uncharacterized protein (117 aa).

The protein resides in the cytoplasm. Its subcellular location is the nucleus. This is an uncharacterized protein from Saccharomyces cerevisiae (strain ATCC 204508 / S288c) (Baker's yeast).